The chain runs to 592 residues: Arginine--tRNA ligase (592 aa).

The short motif at 112-122 (VNPNKELHVGH) is the 'HIGH' region element.

The protein belongs to the class-I aminoacyl-tRNA synthetase family. Monomer.

The protein resides in the cytoplasm. It carries out the reaction tRNA(Arg) + L-arginine + ATP = L-arginyl-tRNA(Arg) + AMP + diphosphate. The sequence is that of Arginine--tRNA ligase from Thermus thermophilus (strain ATCC BAA-163 / DSM 7039 / HB27).